A 303-amino-acid polypeptide reads, in one-letter code: NAD(+)--arginine ADP-ribosyltransferase Lart1 (303 aa).

It is found in the secreted. The catalysed reaction is L-arginyl-[protein] + NAD(+) = N(omega)-(ADP-D-ribosyl)-L-arginyl-[protein] + nicotinamide + H(+). In terms of biological role, ADP-ribosyltransferase that targets a specific class of NAD(+)-dependent glutamate dehydrogenase (GDH) enzymes found in fungi and protists, including many natural hosts of Legionella. Acts by targeting a conserved arginine residue in the NAD(+)-binding pocket of GDH, thereby blocking oxidative deamination of glutamate. Lart1 may target amoeba GDH to prevent a conserved stress response. In vitro, acts on Glud2 from the amoeba Dictyostelium discoideum (DdGluD2) and yeast Gdh2p but does not act on human or Legionella GDH homologs. The sequence is that of NAD(+)--arginine ADP-ribosyltransferase Lart1 from Legionella pneumophila subsp. pneumophila (strain Philadelphia 1 / ATCC 33152 / DSM 7513).